A 312-amino-acid polypeptide reads, in one-letter code: DNA-directed RNA polymerase subunit alpha (312 aa).

An alpha N-terminal domain (alpha-NTD) region spans residues Met1 to Thr229. The alpha C-terminal domain (alpha-CTD) stretch occupies residues Ile246–Ala312.

It belongs to the RNA polymerase alpha chain family. In cyanobacteria the RNAP catalytic core is composed of 2 alpha, 1 beta, 1 beta', 1 gamma and 1 omega subunit. When a sigma factor is associated with the core the holoenzyme is formed, which can initiate transcription.

It carries out the reaction RNA(n) + a ribonucleoside 5'-triphosphate = RNA(n+1) + diphosphate. Its function is as follows. DNA-dependent RNA polymerase catalyzes the transcription of DNA into RNA using the four ribonucleoside triphosphates as substrates. The sequence is that of DNA-directed RNA polymerase subunit alpha from Prochlorococcus marinus (strain SARG / CCMP1375 / SS120).